A 106-amino-acid polypeptide reads, in one-letter code: Large ribosomal subunit protein uL24 (106 aa).

It belongs to the universal ribosomal protein uL24 family. In terms of assembly, part of the 50S ribosomal subunit.

In terms of biological role, one of two assembly initiator proteins, it binds directly to the 5'-end of the 23S rRNA, where it nucleates assembly of the 50S subunit. One of the proteins that surrounds the polypeptide exit tunnel on the outside of the subunit. This Spiroplasma kunkelii protein is Large ribosomal subunit protein uL24.